The chain runs to 920 residues: Isoleucine--tRNA ligase (920 aa).

The 'HIGH' region motif lies at P58–H68. E569 lines the L-isoleucyl-5'-AMP pocket. Residues K610 to S614 carry the 'KMSKS' region motif. K613 serves as a coordination point for ATP. Zn(2+)-binding residues include C895, C898, C910, and C913.

The protein belongs to the class-I aminoacyl-tRNA synthetase family. IleS type 1 subfamily. Monomer. Requires Zn(2+) as cofactor.

It is found in the cytoplasm. It carries out the reaction tRNA(Ile) + L-isoleucine + ATP = L-isoleucyl-tRNA(Ile) + AMP + diphosphate. Functionally, catalyzes the attachment of isoleucine to tRNA(Ile). As IleRS can inadvertently accommodate and process structurally similar amino acids such as valine, to avoid such errors it has two additional distinct tRNA(Ile)-dependent editing activities. One activity is designated as 'pretransfer' editing and involves the hydrolysis of activated Val-AMP. The other activity is designated 'posttransfer' editing and involves deacylation of mischarged Val-tRNA(Ile). The chain is Isoleucine--tRNA ligase from Helicobacter pylori (strain HPAG1).